The primary structure comprises 351 residues: L-threonine 3-dehydrogenase (351 aa).

Cys-39 contacts Zn(2+). Residues Thr-41 and His-44 each act as charge relay system in the active site. 6 residues coordinate Zn(2+): His-64, Glu-65, Cys-94, Cys-97, Cys-100, and Cys-108. NAD(+)-binding positions include Ile-176, Asp-196, Arg-201, 271–273 (LGI), and 295–296 (IY).

This sequence belongs to the zinc-containing alcohol dehydrogenase family. Homotetramer. Zn(2+) is required as a cofactor.

It localises to the cytoplasm. It catalyses the reaction L-threonine + NAD(+) = (2S)-2-amino-3-oxobutanoate + NADH + H(+). Its pathway is amino-acid degradation; L-threonine degradation via oxydo-reductase pathway; glycine from L-threonine: step 1/2. Catalyzes the NAD(+)-dependent oxidation of L-threonine to 2-amino-3-ketobutyrate. The protein is L-threonine 3-dehydrogenase of Francisella tularensis subsp. tularensis (strain SCHU S4 / Schu 4).